Reading from the N-terminus, the 1207-residue chain is DNA-directed RNA polymerase subunit beta' (1207 aa).

Positions 60, 62, 75, and 78 each coordinate Zn(2+). Mg(2+)-binding residues include Asp450, Asp452, and Asp454. Zn(2+) is bound by residues Cys819, Cys893, Cys900, and Cys903.

It belongs to the RNA polymerase beta' chain family. As to quaternary structure, the RNAP catalytic core consists of 2 alpha, 1 beta, 1 beta' and 1 omega subunit. When a sigma factor is associated with the core the holoenzyme is formed, which can initiate transcription. Mg(2+) is required as a cofactor. The cofactor is Zn(2+).

The catalysed reaction is RNA(n) + a ribonucleoside 5'-triphosphate = RNA(n+1) + diphosphate. In terms of biological role, DNA-dependent RNA polymerase catalyzes the transcription of DNA into RNA using the four ribonucleoside triphosphates as substrates. In Streptococcus pyogenes serotype M12 (strain MGAS2096), this protein is DNA-directed RNA polymerase subunit beta'.